The chain runs to 138 residues: Putative pre-16S rRNA nuclease (138 aa).

The protein belongs to the YqgF nuclease family.

The protein localises to the cytoplasm. Its function is as follows. Could be a nuclease involved in processing of the 5'-end of pre-16S rRNA. In Escherichia coli O45:K1 (strain S88 / ExPEC), this protein is Putative pre-16S rRNA nuclease.